Consider the following 478-residue polypeptide: Stromelysin-1 (478 aa).

An N-terminal signal peptide occupies residues 1–17 (MKTLPTLLLLCVALCSA). Positions 18-100 (YPLDGASRDA…PRCGVPDVGH (83 aa)) are cleaved as a propeptide — activation peptide. A Cysteine switch motif is present at residues 91 to 98 (PRCGVPDV). Residue C93 participates in Zn(2+) binding. Ca(2+) contacts are provided by D125 and D159. Residues H169 and D171 each coordinate Zn(2+). Residues D176, G177, G179, and V181 each contribute to the Ca(2+) site. Residue H184 participates in Zn(2+) binding. Ca(2+) contacts are provided by G191, N193, and D195. Residue H197 participates in Zn(2+) binding. The Ca(2+) site is built by D199, D200, and E202. Residue H219 participates in Zn(2+) binding. The active site involves E220. Residues H223 and H229 each contribute to the Zn(2+) site. 4 Hemopexin repeats span residues 288–337 (PVMC…WPSL), 338–384 (PSAV…GFPS), 386–434 (IRKI…FPGI), and 435–478 (NPKI…WFQC). Residues C291 and C478 are joined by a disulfide bond. Residue D298 coordinates Ca(2+). The Ca(2+) site is built by D390 and D439.

It belongs to the peptidase M10A family. Ca(2+) is required as a cofactor. Requires Zn(2+) as cofactor.

Its subcellular location is the secreted. It is found in the extracellular space. The protein localises to the extracellular matrix. It carries out the reaction Preferential cleavage where P1', P2' and P3' are hydrophobic residues.. Metalloproteinase with a rather broad substrate specificity that can degrade fibronectin, laminin, gelatins of type I, III, IV, and V; collagens III, IV, X, and IX, and cartilage proteoglycans. Activates different molecules including growth factors, plasminogen or other matrix metalloproteinases such as MMP9. Once released into the extracellular matrix (ECM), the inactive pro-enzyme is activated by the plasmin cascade signaling pathway. Also acts intracellularly. For example, in dopaminergic neurons, gets activated by the serine protease HTRA2 upon stress and plays a pivotal role in DA neuronal degeneration by mediating microglial activation and alpha-synuclein/SNCA cleavage. In addition, plays a role in immune response and possesses antiviral activity against various viruses. Mechanistically, translocates from the cytoplasm into the cell nucleus upon virus infection to influence NF-kappa-B activities. The polypeptide is Stromelysin-1 (MMP3) (Oryctolagus cuniculus (Rabbit)).